Here is an 89-residue protein sequence, read N- to C-terminus: Small ribosomal subunit protein uS15 (89 aa).

A compositionally biased stretch (basic and acidic residues) spans 1–21 (MSITPERKQEMIKDYATKEGD). Positions 1–23 (MSITPERKQEMIKDYATKEGDTG) are disordered.

The protein belongs to the universal ribosomal protein uS15 family. In terms of assembly, part of the 30S ribosomal subunit. Forms a bridge to the 50S subunit in the 70S ribosome, contacting the 23S rRNA.

Functionally, one of the primary rRNA binding proteins, it binds directly to 16S rRNA where it helps nucleate assembly of the platform of the 30S subunit by binding and bridging several RNA helices of the 16S rRNA. Forms an intersubunit bridge (bridge B4) with the 23S rRNA of the 50S subunit in the ribosome. In Rhodospirillum rubrum (strain ATCC 11170 / ATH 1.1.1 / DSM 467 / LMG 4362 / NCIMB 8255 / S1), this protein is Small ribosomal subunit protein uS15.